A 298-amino-acid polypeptide reads, in one-letter code: Zinc import ATP-binding protein ZnuC (298 aa).

The ABC transporter domain occupies 17–232 (IELRNAGVYR…PEYVRLFGSR (216 aa)). 49-56 (GPNGAGKS) is an ATP binding site. Positions 273–298 (RGHCHVEDGHHHDHEHHHHEGGQPRA) are disordered. The segment covering 276–298 (CHVEDGHHHDHEHHHHEGGQPRA) has biased composition (basic and acidic residues).

It belongs to the ABC transporter superfamily. Zinc importer (TC 3.A.1.15.5) family. The complex is composed of two ATP-binding proteins (ZnuC), two transmembrane proteins (ZnuB) and a solute-binding protein (ZnuA).

Its subcellular location is the cell inner membrane. The catalysed reaction is Zn(2+)(out) + ATP(in) + H2O(in) = Zn(2+)(in) + ADP(in) + phosphate(in) + H(+)(in). In terms of biological role, part of the ABC transporter complex ZnuABC involved in zinc import. Responsible for energy coupling to the transport system. The polypeptide is Zinc import ATP-binding protein ZnuC (Brucella suis biovar 1 (strain 1330)).